We begin with the raw amino-acid sequence, 316 residues long: MAYTNNLQIIYGDATLGITGKNFHYLFSYERGGLESLNINNKEWLYRVPTPTFWRATTDNDRGNGFNLKASQWLGADMFTKCTKIELKVDDRQFDELPIAPINNQFSNHEYADHVQIAFWYQTLTNPATDVKIIYNIDNTGCINIVMHYFGKKGLPPLPVIGMRFIMPTAATGFDYEGLSGETYPDRMAGAKEGKFHVDGLPVTKYLVPQENGMHMQTKALKITRSSTLNNADQESEFSLKLKQDKQPFNFSCLPYTAEELENATHLEELPLARRTVLVIAGAVRGVGGIDSWGADVEKQYHINPEKDYEFSFNLN.

Belongs to the bacterial beta-galactosidase small subunit family. Heterodimer of a large (LacL) and a small subunit (LacM).

The catalysed reaction is Hydrolysis of terminal non-reducing beta-D-galactose residues in beta-D-galactosides.. In terms of biological role, component of a beta-galactosidase. This Lactobacillus acidophilus (strain ATCC 700396 / NCK56 / N2 / NCFM) protein is Beta-galactosidase small subunit (lacM).